Here is a 382-residue protein sequence, read N- to C-terminus: Proton extrusion protein PxcA (382 aa).

Helical transmembrane passes span 156 to 176, 257 to 277, 305 to 325, and 340 to 360; these read TLIS…VQQI, AIKN…VCII, IILF…QVLL, and FILL…KYWI.

Belongs to the CemA family.

The protein localises to the cell inner membrane. Required for H(+) efflux immediately after light irradiation to form a rapid H(+) concentration gradient across the thylakoid membranes. Together with PxcL, contributes to transient H(+) uptake following dark to light transition. This is Proton extrusion protein PxcA from Prochlorococcus marinus (strain MIT 9313).